Reading from the N-terminus, the 395-residue chain is Cyclomarin C epoxidase CymV (395 aa).

This sequence belongs to the cytochrome P450 family.

Cytochrome P450; part of the gene cluster that mediates the biosynthesis of cyclic heptapeptides, known as cyclomarins and also of cyclic dipeptides, called cyclomarazines, which have both antimicrobial and cytotoxic effects. First, CymD catalyzes the reverse N-prenylation of monomeric L-tryptophan with dimethylallyl diphosphate (DMAPP) to form N-(1,1-dimethylallyl)-tryptophan (r-N-DMAT). The N-(1,1-dimethylallyl)-tryptophan produced by CymD is then combined with a range of standard and nonproteinogenic amino acid substrates to synthesize the peptides, a process that is probably catalyzed by the non-canonical nonribosomal peptide synthetase (NRPS), CymA. Other proteins in the cluster catalyze further modifications of the peptides including CymV which catalyzes the oxidation of olefinic cyclomarins and cyclomarazines to their respective epoxide derivatives. In Salinispora arenicola (strain CNS-205), this protein is Cyclomarin C epoxidase CymV.